A 369-amino-acid chain; its full sequence is 3-isopropylmalate dehydrogenase (369 aa).

Substrate contacts are provided by R98, R108, R136, and D227. 3 residues coordinate Mg(2+): D227, D251, and D255. Residue 290–302 participates in NAD(+) binding; sequence GSAPDIAGKGIAN.

It belongs to the isocitrate and isopropylmalate dehydrogenases family. LeuB type 1 subfamily. As to quaternary structure, homodimer. The cofactor is Mg(2+). Mn(2+) serves as cofactor.

Its subcellular location is the cytoplasm. The enzyme catalyses (2R,3S)-3-isopropylmalate + NAD(+) = 4-methyl-2-oxopentanoate + CO2 + NADH. It participates in amino-acid biosynthesis; L-leucine biosynthesis; L-leucine from 3-methyl-2-oxobutanoate: step 3/4. Catalyzes the oxidation of 3-carboxy-2-hydroxy-4-methylpentanoate (3-isopropylmalate) to 3-carboxy-4-methyl-2-oxopentanoate. The product decarboxylates to 4-methyl-2 oxopentanoate. In Gluconobacter oxydans (strain 621H) (Gluconobacter suboxydans), this protein is 3-isopropylmalate dehydrogenase.